Consider the following 475-residue polypeptide: Cysteine--tRNA ligase (475 aa).

Cys-28 provides a ligand contact to Zn(2+). Residues 30–40 carry the 'HIGH' region motif; that stretch reads PTVYDETHIGH. Residues Cys-208, His-233, and Glu-237 each contribute to the Zn(2+) site. The 'KMSKS' region motif lies at 265-269; sequence KMSKS. Lys-268 lines the ATP pocket.

Belongs to the class-I aminoacyl-tRNA synthetase family. The cofactor is Zn(2+).

Its subcellular location is the cytoplasm. It carries out the reaction tRNA(Cys) + L-cysteine + ATP = L-cysteinyl-tRNA(Cys) + AMP + diphosphate. The chain is Cysteine--tRNA ligase from Methanococcus vannielii (strain ATCC 35089 / DSM 1224 / JCM 13029 / OCM 148 / SB).